The chain runs to 217 residues: Probable GTP-binding protein EngB (217 aa).

In terms of domain architecture, EngB-type G spans 40 to 217; it reads DVPEIAFAGR…RAAVLQDAMG (178 aa). GTP contacts are provided by residues 48–55, 75–79, 95–98, 162–165, and 196–198; these read GRSNVGKS, GRTQE, DMPG, TKAD, and TSS. Mg(2+) contacts are provided by serine 55 and threonine 77.

This sequence belongs to the TRAFAC class TrmE-Era-EngA-EngB-Septin-like GTPase superfamily. EngB GTPase family. Mg(2+) is required as a cofactor.

Functionally, necessary for normal cell division and for the maintenance of normal septation. In Novosphingobium aromaticivorans (strain ATCC 700278 / DSM 12444 / CCUG 56034 / CIP 105152 / NBRC 16084 / F199), this protein is Probable GTP-binding protein EngB.